The chain runs to 944 residues: MGFWENNKDSITSGLKSAGKYGYQGTKYVAKTGYKASKKHYNNSKARRERKSGKKNSSDEEYESEDEMEYERKPTDIRSLKDPKSFPPPPLKPGQKTYAGQQQQQMPNGQASYAFQGAYQGQPGAGSMEQSQYAQPQYNQYPQQQLQQGVVPQQPPIYGEQVPPYGSNSNATSYQSLPQQNQPQYAIPSQVSLNSASQQSTGFVSQNLQYGTQSSNPAPSPSFQNGLQCHQQPQYVSHGSTNLGQSQFPSGQQQQPTTQFGQQVLPSPAQPHPQPQQQQQGQPLPPPRGQVILPAPGEPLSNGFEQQQQQQQQQQQQQPLNQNNALLPQMNVEGVSGMAAVQPVYGQAMSSTTNMQDSNPSYGASPMQGQPPVGGQPPVPVRMQPQPPQPMQQGNIYPIEPSLDSTSSTPHFEVTPFDPDAPAPKPKIDIPTVDVSSLPPPPTHRDRGAVLHQEPAPSGKIQPNTTSSAASLPAKHSRTTTADNERNSGNKENDESTSKSSILGHYDVDVNIMPPPKPFRHGLDSVPSEHTRKNALERAVPILPPRNNVEPPPPPSRGNFERTELVLSTNAANVQEDPISNFLPPPKPFRHTETKQNQNSKASPVEIKDEVLPGHPSEEDRNVEPSLLPQSKPQSKSQSQFRRAHMETQPIQNFQPPPKPFRRSQSSNSSDSSYTIDGPEANHGRGRGRIAKHHDGDEYNPKSENSTENGRLGDAPNSFIRKRAPTPPAPSRSEKLHEGAITSEFDSSKDANKYEKSIPPVTSSIQAQQSTKKAPPPVVKPKPRNFSLKANEYPKELTREATGQDEVLNSITNELSHIKLRKTNVNLEKLGGAKKVKDSSPVPSDLDEKYVSASGSITPPRPPPSRSSPKKVPPVVPKKNDNLKKKPPVVPKKKPLLKSLEPRPIEMERAYSGDISAADDNLNPFERYKRNVVPQEDDRLHKLK.

4 disordered regions span residues 1–331 (MGFW…PQMN), 349–805 (MSST…TGQD), 821–901 (RKTN…KSLE), and 916–944 (SAAD…HKLK). Positions 36 to 54 (ASKKHYNNSKARRERKSGK) are enriched in basic residues. Residues Ser57, Ser58, and Ser64 each carry the phosphoserine modification. Acidic residues predominate over residues 59-69 (DEEYESEDEME). The segment covering 70–84 (YERKPTDIRSLKDPK) has biased composition (basic and acidic residues). Composition is skewed to low complexity over residues 93 to 105 (PGQK…QQQQ) and 130 to 158 (QSQY…PPIY). The span at 166–244 (GSNSNATSYQ…YVSHGSTNLG (79 aa)) shows a compositional bias: polar residues. 2 stretches are compositionally biased toward low complexity: residues 245–267 (QSQF…VLPS) and 306–318 (QQQQ…QQQQ). Residues 349-362 (MSSTTNMQDSNPSY) are compositionally biased toward polar residues. The segment covering 374–390 (GGQPPVPVRMQPQPPQP) has biased composition (pro residues). A compositionally biased stretch (polar residues) spans 461–470 (IQPNTTSSAA). Ser471 carries the post-translational modification Phosphoserine. 3 stretches are compositionally biased toward basic and acidic residues: residues 483-497 (DNER…DEST), 521-536 (HGLD…KNAL), and 606-623 (EIKD…DRNV). Composition is skewed to low complexity over residues 625–640 (PSLL…SQSQ) and 664–673 (SQSSNSSDSS). Thr726 bears the Phosphothreonine mark. Residues 746-756 (DSSKDANKYEK) are compositionally biased toward basic and acidic residues. The span at 760-771 (PVTSSIQAQQST) shows a compositional bias: polar residues. Position 858 is a phosphothreonine (Thr858). Pro residues predominate over residues 859–876 (PPRPPPSRSSPKKVPPVV). Over residues 885–896 (KKPPVVPKKKPL) the composition is skewed to basic residues.

The protein belongs to the AIM3 family. As to quaternary structure, interacts with RVS167.

Its subcellular location is the membrane raft. This is Altered inheritance of mitochondria protein 3 (AIM3) from Saccharomyces cerevisiae (strain YJM789) (Baker's yeast).